The sequence spans 85 residues: MAHKKAGGSSRNGRDSESKRLGVKRFGGESVLAGSIIVRQRGTKFHAGVNVGCGKDHTLFATATGTIKFEVKGPNNRKFVSIVAE.

The segment at 1–22 (MAHKKAGGSSRNGRDSESKRLG) is disordered.

It belongs to the bacterial ribosomal protein bL27 family.

The protein is Large ribosomal subunit protein bL27 of Tolumonas auensis (strain DSM 9187 / NBRC 110442 / TA 4).